The sequence spans 556 residues: DNA ligase (556 aa).

Residue Glu-245 participates in ATP binding. Residue Lys-247 is the N6-AMP-lysine intermediate of the active site. Arg-252, Arg-267, Glu-296, Phe-336, Arg-408, and Lys-414 together coordinate ATP.

Belongs to the ATP-dependent DNA ligase family. It depends on Mg(2+) as a cofactor.

It carries out the reaction ATP + (deoxyribonucleotide)n-3'-hydroxyl + 5'-phospho-(deoxyribonucleotide)m = (deoxyribonucleotide)n+m + AMP + diphosphate.. Functionally, DNA ligase that seals nicks in double-stranded DNA during DNA replication, DNA recombination and DNA repair. In Methanosphaerula palustris (strain ATCC BAA-1556 / DSM 19958 / E1-9c), this protein is DNA ligase.